The chain runs to 417 residues: MDRETRALADSHFRGLGVDVPGVGQAPGRVAFVSEPGAFSYADFVRGFLLPNLPCVFSSAFTQGWGSRRRWVTPAGRPDFDHLLRTYGDVVVPVANCGVQEYNSNPKEHMTLRDYITYWKEYIQAGYSSPRGCLYLKDWHLCRDFPVEDVFTLPVYFSSDWLNEFWDALDVDDYRFVYAGPAGSWSPFHADIFRSFSWSVNVCGRKKWLLFPPGQEEALRDRHGNLPYDVTSPALCDTHLHPRNQLAGPPLEITQEAGEMVFVPSGWHHQVHNLDDTISINHNWVNGFNLANMWRFLQQELCAVQEEVSEWRDSMPDWHHHCQVIMRSCSGINFEEFYHFLKVIAEKRLLVLREAAAEDGAGLGFEQAAFDVGRITEVLASLVAHPDFQRVDTSAFSPQPKELLQQLREAVDAAAAP.

One can recognise a JmjC domain in the interval 142–301 (CRDFPVEDVF…NMWRFLQQEL (160 aa)). Positions 189, 191, and 269 each coordinate Fe cation.

It belongs to the JMJD6 family. As to quaternary structure, interacts with ETF1. Interacts with the ETF1-GSPT1 complex. The cofactor is Fe(2+).

It localises to the cytoplasm. It catalyses the reaction L-lysyl-[protein] + 2-oxoglutarate + O2 = 4-hydroxy-L-lysyl-[protein] + succinate + CO2. Functionally, catalyzes the 2-oxoglutarate and iron-dependent C4-lysyl hydroxylation of ETF1 at 'Lys-63' thereby promoting the translational termination efficiency of ETF1. This chain is 2-oxoglutarate and iron-dependent oxygenase JMJD4 (JMJD4), found in Homo sapiens (Human).